A 599-amino-acid polypeptide reads, in one-letter code: Sulfite reductase [NADPH] flavoprotein alpha-component (599 aa).

Positions 64 to 202 constitute a Flavodoxin-like domain; it reads ITIISASQTG…AASEWRARVV (139 aa). Residues 70 to 75, 117 to 120, and 153 to 162 each bind FMN; these read SQTGNA, STQG, and LGDSSYEFFC. Residues 234 to 448 form the FAD-binding FR-type domain; the sequence is DAPLAASLSV…IEHNDNFRLP (215 aa). FAD-binding positions include T322, A356, 386–389, 404–406, Y410, and 419–422; these read RLYS, TVG, and GGAS. NADP(+) is bound by residues 519–520, 525–529, and D561; these read SR and KIYVQ. Y599 contacts FAD.

This sequence belongs to the NADPH-dependent sulphite reductase flavoprotein subunit CysJ family. It in the N-terminal section; belongs to the flavodoxin family. In the C-terminal section; belongs to the flavoprotein pyridine nucleotide cytochrome reductase family. Alpha(8)-beta(8). The alpha component is a flavoprotein, the beta component is a hemoprotein. The cofactor is FAD. FMN is required as a cofactor.

It catalyses the reaction hydrogen sulfide + 3 NADP(+) + 3 H2O = sulfite + 3 NADPH + 4 H(+). It functions in the pathway sulfur metabolism; hydrogen sulfide biosynthesis; hydrogen sulfide from sulfite (NADPH route): step 1/1. Component of the sulfite reductase complex that catalyzes the 6-electron reduction of sulfite to sulfide. This is one of several activities required for the biosynthesis of L-cysteine from sulfate. The flavoprotein component catalyzes the electron flow from NADPH -&gt; FAD -&gt; FMN to the hemoprotein component. The protein is Sulfite reductase [NADPH] flavoprotein alpha-component of Escherichia coli O6:H1 (strain CFT073 / ATCC 700928 / UPEC).